Here is a 31-residue protein sequence, read N- to C-terminus: Photosystem II reaction center protein T (31 aa).

A helical membrane pass occupies residues alanine 3–phenylalanine 23.

The protein belongs to the PsbT family. As to quaternary structure, PSII is composed of 1 copy each of membrane proteins PsbA, PsbB, PsbC, PsbD, PsbE, PsbF, PsbH, PsbI, PsbJ, PsbK, PsbL, PsbM, PsbT, PsbX, PsbY, PsbZ, Psb30/Ycf12, at least 3 peripheral proteins of the oxygen-evolving complex and a large number of cofactors. It forms dimeric complexes.

The protein resides in the plastid. It is found in the chloroplast thylakoid membrane. Functionally, found at the monomer-monomer interface of the photosystem II (PS II) dimer, plays a role in assembly and dimerization of PSII. PSII is a light-driven water plastoquinone oxidoreductase, using light energy to abstract electrons from H(2)O, generating a proton gradient subsequently used for ATP formation. The sequence is that of Photosystem II reaction center protein T from Pyropia yezoensis (Susabi-nori).